Reading from the N-terminus, the 273-residue chain is tRNA (guanine-N(7)-)-methyltransferase A (273 aa).

S-adenosyl-L-methionine-binding residues include glycine 86, glutamate 109, arginine 111, asparagine 142, alanine 143, and leucine 162. Aspartate 165 is a catalytic residue. The interval 166-174 (PHFKKTKHK) is alphaC helix. Residues threonine 240 and glutamate 242 each coordinate S-adenosyl-L-methionine. The tract at residues 240 to 248 (TEEGKKVQR) is alpha6 helix.

This sequence belongs to the class I-like SAM-binding methyltransferase superfamily. TrmB family. Catalytic component of the METTL1-WDR4 complex, composed of mettl1 and wdr4.

The protein resides in the nucleus. It catalyses the reaction guanosine(46) in tRNA + S-adenosyl-L-methionine = N(7)-methylguanosine(46) in tRNA + S-adenosyl-L-homocysteine. The enzyme catalyses a guanosine in mRNA + S-adenosyl-L-methionine = an N(7)-methylguanosine in mRNA + S-adenosyl-L-homocysteine. The catalysed reaction is a guanosine in miRNA + S-adenosyl-L-methionine = an N(7)-methylguanosine in miRNA + S-adenosyl-L-homocysteine. It participates in tRNA modification; N(7)-methylguanine-tRNA biosynthesis. In terms of biological role, catalytic component of METTL1-WDR4 methyltransferase complex that mediates the formation of N(7)-methylguanine in a subset of RNA species, such as tRNAs, mRNAs and microRNAs (miRNAs). Catalyzes the formation of N(7)-methylguanine at position 46 (m7G46) in a large subset of tRNAs that contain the 5'-RAGGU-3' motif within the variable loop. M7G46 interacts with C13-G22 in the D-loop to stabilize tRNA tertiary structure and protect tRNAs from decay. Also acts as a methyltransferase for a subset of internal N(7)-methylguanine in mRNAs. Internal N(7)-methylguanine methylation of mRNAs in response to stress promotes their relocalization to stress granules, thereby suppressing their translation. Also methylates a specific subset of miRNAs. The protein is tRNA (guanine-N(7)-)-methyltransferase A (mettl1-A) of Xenopus tropicalis (Western clawed frog).